Reading from the N-terminus, the 119-residue chain is Chorion class CA protein ERA.3 (119 aa).

The N-terminal stretch at 1–21 (MSYFVVFAICIQACLFHNVYS) is a signal peptide. The segment at 22–55 (QCLGRVGPGGPPLGPYGGPLGGPGYGPVGYGGCG) is left arm. Residues 56–103 (GYGGSGIGNVAVAGELPVVGSSAVMGQVPVIGAVEFAGPACAVGSVSI) form a central domain region. Residues 104–119 (SGACGPTCGCGGLPYY) form a right arm region.

It belongs to the chorion protein family.

This protein is one of many from the eggshell of the silk moth. The sequence is that of Chorion class CA protein ERA.3 (ERA.3) from Bombyx mori (Silk moth).